Consider the following 396-residue polypeptide: Maltose/maltodextrin-binding periplasmic protein (396 aa).

Positions 1-26 are cleaved as a signal peptide; it reads MKIKTGARILALSALTTMMFSASALA.

The protein belongs to the bacterial solute-binding protein 1 family. The complex is composed of two ATP-binding proteins (MalK), two transmembrane proteins (MalG and MalF) and a solute-binding protein (MalE).

It localises to the periplasm. Its function is as follows. Part of the ABC transporter complex MalEFGK involved in maltose/maltodextrin import. Binds maltose and higher maltodextrins. The sequence is that of Maltose/maltodextrin-binding periplasmic protein (malE) from Escherichia coli O157:H7.